We begin with the raw amino-acid sequence, 20 residues long: Protease inhibitor (20 aa).

Monomer. Glycosylated. Stored in epidermis and secreted into the hemolymph and cuticle. Not detected in the interior of the epidermis, fat body cells or columnar or goblet cells of the midgut epithelium (at protein level).

Inhibits trypsin and chymotrypsin. The polypeptide is Protease inhibitor (Antheraea mylitta (Tasar silkworm)).